The following is a 1008-amino-acid chain: ATP-dependent DNA/RNA helicase DHX36 (1008 aa).

The interval 1-51 is required for recruitment to cytoplasmic stress granules; that stretch reads MSYDYHQNWGRDGGPRSSGGGYGGGPAGGHGGNRGSGGGGGGGGGGRGGRG. A disordered region spans residues 1 to 58; sequence MSYDYHQNWGRDGGPRSSGGGYGGGPAGGHGGNRGSGGGGGGGGGGRGGRGRHPGHLK. Residues 1-104 form a required for the pre-miR-134 transport region; that stretch reads MSYDYHQNWG…IVQLLNSVQA (104 aa). The segment at 1–200 is necessary for nuclear and nucleolar caps localizations; sequence MSYDYHQNWG…KKNDLRYIEM (200 aa). Over residues 16 to 48 the composition is skewed to gly residues; that stretch reads RSSGGGYGGGPAGGHGGNRGSGGGGGGGGGGRG. The tract at residues 53-75 is DSM (DHX36-specific motif); the sequence is HPGHLKGREIGMWYAKKQGQKNK. A required for G4-DNA- and G4-RNA-binding region spans residues 53 to 105; sequence HPGHLKGREIGMWYAKKQGQKNKEAERQERAVVHMDERREEQIVQLLNSVQAK. Residues 72–157 are a coiled coil; it reads QKNKEAERQE…INQEKKMFRI (86 aa). RecA-like domain regions lie at residues 106 to 386 and 387 to 628; these read NDKE…MIHI and PGFT…DYQL. A Phosphoserine modification is found at S161. Positions 217–387 constitute a Helicase ATP-binding domain; the sequence is VNLIDNHQVT…FGNCPMIHIP (171 aa). 233–238 contacts ATP; it reads GCGKTT. The segment at 265–317 is necessary for interaction with single-stranded DNA at the 3'-end of the G4-DNA structure; the sequence is RRISAISVAERVAAERAESCGSGNSTGYQIRLQSRLPRKQGSILYCTTGIILQ. The DEAH box motif lies at 334-337; sequence DEIH. 2 residues coordinate Mg(2+): E335 and H337. In terms of domain architecture, Helicase C-terminal spans 477 to 647; the sequence is ALIRYIVLEE…ELCLQIKILR (171 aa). Residues 498–557 form a necessary for interaction with single-stranded DNA at the 3'-end of the G4-DNA structure region; the sequence is WDNISTLHDLLMSQVMFKSDKFLIIPLHSLMPTVNQTQVFKRTPPGVRKIVIATNIAETS. A Nuclear localization signal motif is present at residues 517-528; the sequence is DKFLIIPLHSLM. ATP contacts are provided by residues S557 and 602–605; that span reads RAGR. Residues 629 to 698 are WH domain; sequence PEILRTPLEE…LGVHLARLPV (70 aa). 3 necessary for interaction with single-stranded DNA at the 3'-end of the G4-DNA structure regions span residues 638 to 697, 849 to 860, and 870 to 900; these read ELCL…ARLP, NLGKKRKMVKVY, and HPKS…IYLY. Residues 841-905 are OB-fold-like subdomains; it reads PKVAKIRLNL…SIYLYDCTEV (65 aa). The residue at position 947 (K947) is an N6-acetyllysine. S963 bears the Phosphoserine mark.

It belongs to the DEAD box helicase family. DEAH subfamily. As to quaternary structure, found in a multi-helicase-TICAM1 complex at least composed of DHX36, DDX1, DDX21 and TICAM1; this complex exists in resting cells with or without dsRNA poly(I:C) ligand stimulation. Interacts (via C-terminus) with TICAM1 (via TIR domain). Interacts (via C-terminus) with DDX21; this interaction serves as bridges to TICAM1. Interacts with TERT; this interaction is dependent on the ability of DHX36 to bind to the G-quadruplex RNA (G4-RNA) structure present in the telomerase RNA template component (TERC). Interacts with DKC1; this interaction is dependent on the ability of DHX36 to bind to the G4-RNA structure present in TERC. Interacts with PARN; this interaction stimulates PARN to enhance uPA mRNA decay. Interacts with EXOSC3; this interaction occurs in a RNase-insensitive manner. Interacts with EXOSC10; this interaction occurs in a RNase-insensitive manner. Interacts with ILF3; this interaction occurs in a RNA-dependent manner. Interacts with ELAVL1; this interaction occurs in an RNA-dependent manner. Interacts with DDX5; this interaction occurs in a RNA-dependent manner. Interacts with DDX17; this interaction occurs in a RNA-dependent manner. Interacts with HDAC1; this interaction occurs in a RNA-dependent manner. Interacts with HDAC3; this interaction occurs in a RNA-dependent manner. Interacts with HDAC4. Interacts with AGO1. Interacts with AGO2. Interacts with ERCC6. Mg(2+) serves as cofactor. In terms of tissue distribution, highly expressed in testis.

The protein localises to the nucleus. Its subcellular location is the cytoplasm. It localises to the cytosol. It is found in the stress granule. The protein resides in the nucleus speckle. The protein localises to the chromosome. Its subcellular location is the telomere. It localises to the mitochondrion. It is found in the perikaryon. The protein resides in the cell projection. The protein localises to the dendrite. Its subcellular location is the axon. The enzyme catalyses ATP + H2O = ADP + phosphate + H(+). With respect to regulation, ATPase activity is enhanced in the presence of homomeric poly(U) RNAs, but not by double-stranded DNA (dsDNA), double-stranded RNA (dsRNA) and tRNA. In terms of biological role, multifunctional ATP-dependent helicase that unwinds G-quadruplex (G4) structures. Plays a role in many biological processes such as genomic integrity, gene expression regulations and as a sensor to initiate antiviral responses. G4 structures correspond to helical structures containing guanine tetrads. Binds with high affinity to and unwinds G4 structures that are formed in nucleic acids (G4-DNA and G4-RNA). Plays a role in genomic integrity. Converts the G4-RNA structure present in telomerase RNA template component (TREC) into a double-stranded RNA to promote P1 helix formation that acts as a template boundary ensuring accurate reverse transcription. Plays a role in transcriptional regulation. Resolves G4-DNA structures in promoters of genes, such as YY1, KIT/c-kit and ALPL and positively regulates their expression. Plays a role in post-transcriptional regulation. Unwinds a G4-RNA structure located in the 3'-UTR polyadenylation site of the pre-mRNA TP53 and stimulates TP53 pre-mRNA 3'-end processing in response to ultraviolet (UV)-induced DNA damage. Binds to the precursor-microRNA-134 (pre-miR-134) terminal loop and regulates its transport into the synapto-dendritic compartment. Involved in the pre-miR-134-dependent inhibition of target gene expression and the control of dendritic spine size. Plays a role in the regulation of cytoplasmic mRNA translation and mRNA stability. Binds to both G4-RNA structures and alternative non-quadruplex-forming sequence within the 3'-UTR of the PITX1 mRNA regulating negatively PITX1 protein expression. Binds to both G4-RNA structure in the 5'-UTR and AU-rich elements (AREs) localized in the 3'-UTR of NKX2-5 mRNA to either stimulate protein translation or induce mRNA decay in an ELAVL1-dependent manner, respectively. Also binds to ARE sequences present in several mRNAs mediating exosome-mediated 3'-5' mRNA degradation. Involved in cytoplasmic urokinase-type plasminogen activator (uPA) mRNA decay. Component of a multi-helicase-TICAM1 complex that acts as a cytoplasmic sensor of viral double-stranded RNA (dsRNA) and plays a role in the activation of a cascade of antiviral responses including the induction of pro-inflammatory cytokines via the adapter molecule TICAM1. Required for early embryonic development and hematopoiesis. Involved in the regulation of cardioblast differentiation and proliferation during heart development. Involved in spermatogonia differentiation. May play a role in ossification. This Homo sapiens (Human) protein is ATP-dependent DNA/RNA helicase DHX36.